Reading from the N-terminus, the 499-residue chain is Bifunctional purine biosynthesis protein PurH (499 aa).

The region spanning 1–144 is the MGS-like domain; sequence MIKRALISVF…KNFKDVVVLT (144 aa).

The protein belongs to the PurH family.

The enzyme catalyses (6R)-10-formyltetrahydrofolate + 5-amino-1-(5-phospho-beta-D-ribosyl)imidazole-4-carboxamide = 5-formamido-1-(5-phospho-D-ribosyl)imidazole-4-carboxamide + (6S)-5,6,7,8-tetrahydrofolate. It carries out the reaction IMP + H2O = 5-formamido-1-(5-phospho-D-ribosyl)imidazole-4-carboxamide. It functions in the pathway purine metabolism; IMP biosynthesis via de novo pathway; 5-formamido-1-(5-phospho-D-ribosyl)imidazole-4-carboxamide from 5-amino-1-(5-phospho-D-ribosyl)imidazole-4-carboxamide (10-formyl THF route): step 1/1. The protein operates within purine metabolism; IMP biosynthesis via de novo pathway; IMP from 5-formamido-1-(5-phospho-D-ribosyl)imidazole-4-carboxamide: step 1/1. The polypeptide is Bifunctional purine biosynthesis protein PurH (Clostridium botulinum (strain Kyoto / Type A2)).